The chain runs to 379 residues: Queuine tRNA-ribosyltransferase (379 aa).

The Proton acceptor role is filled by Asp-94. Substrate-binding positions include 94–98 (DSGGF), Asp-148, Gln-191, and Gly-218. The segment at 249 to 255 (GVGSPDS) is RNA binding. The Nucleophile role is filled by Asp-268. Residues 273-277 (TRIAR) form an RNA binding; important for wobble base 34 recognition region. Positions 306, 308, 311, and 337 each coordinate Zn(2+).

It belongs to the queuine tRNA-ribosyltransferase family. In terms of assembly, homodimer. Within each dimer, one monomer is responsible for RNA recognition and catalysis, while the other monomer binds to the replacement base PreQ1. It depends on Zn(2+) as a cofactor.

It carries out the reaction 7-aminomethyl-7-carbaguanine + guanosine(34) in tRNA = 7-aminomethyl-7-carbaguanosine(34) in tRNA + guanine. It participates in tRNA modification; tRNA-queuosine biosynthesis. Its function is as follows. Catalyzes the base-exchange of a guanine (G) residue with the queuine precursor 7-aminomethyl-7-deazaguanine (PreQ1) at position 34 (anticodon wobble position) in tRNAs with GU(N) anticodons (tRNA-Asp, -Asn, -His and -Tyr). Catalysis occurs through a double-displacement mechanism. The nucleophile active site attacks the C1' of nucleotide 34 to detach the guanine base from the RNA, forming a covalent enzyme-RNA intermediate. The proton acceptor active site deprotonates the incoming PreQ1, allowing a nucleophilic attack on the C1' of the ribose to form the product. After dissociation, two additional enzymatic reactions on the tRNA convert PreQ1 to queuine (Q), resulting in the hypermodified nucleoside queuosine (7-(((4,5-cis-dihydroxy-2-cyclopenten-1-yl)amino)methyl)-7-deazaguanosine). The chain is Queuine tRNA-ribosyltransferase from Halalkalibacterium halodurans (strain ATCC BAA-125 / DSM 18197 / FERM 7344 / JCM 9153 / C-125) (Bacillus halodurans).